A 784-amino-acid polypeptide reads, in one-letter code: uncharacterized protein (784 aa).

Residues 422–619 enclose the 3'-5' exonuclease domain; it reads IRIVQNEQDL…EVFQKIVEVV (198 aa).

This is an uncharacterized protein from Caenorhabditis elegans.